Consider the following 224-residue polypeptide: Endonuclease NucS (224 aa).

The protein belongs to the NucS endonuclease family.

The protein resides in the cytoplasm. Functionally, cleaves both 3' and 5' ssDNA extremities of branched DNA structures. This Rhodococcus jostii (strain RHA1) protein is Endonuclease NucS.